The primary structure comprises 123 residues: D-ribose pyranase (123 aa).

The active-site Proton donor is His20. Substrate is bound by residues Asp28, His90, and 112–114 (YAN).

This sequence belongs to the RbsD / FucU family. RbsD subfamily. Homodecamer.

The protein resides in the cytoplasm. It catalyses the reaction beta-D-ribopyranose = beta-D-ribofuranose. The protein operates within carbohydrate metabolism; D-ribose degradation; D-ribose 5-phosphate from beta-D-ribopyranose: step 1/2. Functionally, catalyzes the interconversion of beta-pyran and beta-furan forms of D-ribose. This Corynebacterium glutamicum (strain R) protein is D-ribose pyranase.